Reading from the N-terminus, the 421-residue chain is Protein PHLOEM UNLOADING MODULATOR (421 aa).

The next 7 membrane-spanning stretches (helical) occupy residues 30 to 50 (LMPV…LFYK), 60 to 80 (IPFL…ALCV), 124 to 144 (HIIG…SVVF), 158 to 178 (YIFT…STIL), 286 to 306 (AMAW…LFVA), 323 to 343 (CIVA…IWSA), and 397 to 417 (TVFA…ALTL).

It belongs to the sphingomyelin synthase family.

Its subcellular location is the membrane. It functions in the pathway sphingolipid metabolism. Functionally, catalyzes the biosynthesis of sphingolipids with very long-chain fatty acid (VLCFA). Required for the formation of plasmodesmal cytoplasmic sleeve during the transition from type I to type II plasmodesmata to modulate post-sieve elements (SE) unloading and symplastic cell-to-cell molecular trafficking at the phloem pole pericycle (PPP)-endodermis interface in roots. The sequence is that of Protein PHLOEM UNLOADING MODULATOR from Arabidopsis thaliana (Mouse-ear cress).